Consider the following 722-residue polypeptide: Polyribonucleotide nucleotidyltransferase (722 aa).

Mg(2+)-binding residues include D486 and D492. Positions 553–612 constitute a KH domain; it reads PKIVQLQIDIDKISLVIGSTGKTVKAITDEFEVKVQIEQNGKIILFGDDDFKMQKAKERI. The S1 motif domain maps to 622–717; it reads GEIYEGTVKK…KFGKIDLEIV (96 aa).

Belongs to the polyribonucleotide nucleotidyltransferase family. The cofactor is Mg(2+).

The protein localises to the cytoplasm. The enzyme catalyses RNA(n+1) + phosphate = RNA(n) + a ribonucleoside 5'-diphosphate. Functionally, involved in mRNA degradation. Catalyzes the phosphorolysis of single-stranded polyribonucleotides processively in the 3'- to 5'-direction. This chain is Polyribonucleotide nucleotidyltransferase, found in Borreliella burgdorferi (strain ZS7) (Borrelia burgdorferi).